Consider the following 940-residue polypeptide: Phosphoenolpyruvate carboxylase (940 aa).

Residues His138 and Lys603 contribute to the active site.

This sequence belongs to the PEPCase type 1 family. Requires Mg(2+) as cofactor.

The catalysed reaction is oxaloacetate + phosphate = phosphoenolpyruvate + hydrogencarbonate. Functionally, forms oxaloacetate, a four-carbon dicarboxylic acid source for the tricarboxylic acid cycle. This chain is Phosphoenolpyruvate carboxylase, found in Streptococcus thermophilus (strain ATCC BAA-491 / LMD-9).